Consider the following 84-residue polypeptide: Defensin-like protein 140 (84 aa).

The first 28 residues, 1–28 (MSKSLQLIVTVLCIFTILVLGEICLAKG), serve as a signal peptide directing secretion. 4 disulfides stabilise this stretch: Cys37/Cys81, Cys46/Cys65, Cys51/Cys75, and Cys55/Cys77.

The protein belongs to the DEFL family.

It localises to the secreted. The protein is Defensin-like protein 140 (LCR15) of Arabidopsis thaliana (Mouse-ear cress).